Consider the following 513-residue polypeptide: E3 ubiquitin-protein ligase XBAT33 (513 aa).

ANK repeat units lie at residues glycine 44 to serine 73, cysteine 77 to arginine 106, alanine 111 to lysine 140, glycine 171 to alanine 200, and alanine 214 to leucine 244. The segment at cysteine 312–arginine 362 adopts an RING-type zinc-finger fold. Disordered regions lie at residues aspartate 397–arginine 417 and histidine 455–glutamine 483. Basic and acidic residues-rich tracts occupy residues histidine 455–glutamate 466 and threonine 474–glutamine 483.

The enzyme catalyses S-ubiquitinyl-[E2 ubiquitin-conjugating enzyme]-L-cysteine + [acceptor protein]-L-lysine = [E2 ubiquitin-conjugating enzyme]-L-cysteine + N(6)-ubiquitinyl-[acceptor protein]-L-lysine.. It participates in protein modification; protein ubiquitination. Its function is as follows. Possesses E3 ubiquitin-protein ligase activity when associated with the E2 enzyme UBC8 in vitro. The polypeptide is E3 ubiquitin-protein ligase XBAT33 (XBAT33) (Arabidopsis thaliana (Mouse-ear cress)).